Consider the following 501-residue polypeptide: Probable cytosol aminopeptidase (501 aa).

Mn(2+)-binding residues include Lys-267 and Asp-272. Lys-279 is an active-site residue. Mn(2+) contacts are provided by Asp-290, Asp-349, and Glu-351. Arg-353 is an active-site residue.

It belongs to the peptidase M17 family. It depends on Mn(2+) as a cofactor.

It is found in the cytoplasm. It carries out the reaction Release of an N-terminal amino acid, Xaa-|-Yaa-, in which Xaa is preferably Leu, but may be other amino acids including Pro although not Arg or Lys, and Yaa may be Pro. Amino acid amides and methyl esters are also readily hydrolyzed, but rates on arylamides are exceedingly low.. The catalysed reaction is Release of an N-terminal amino acid, preferentially leucine, but not glutamic or aspartic acids.. In terms of biological role, presumably involved in the processing and regular turnover of intracellular proteins. Catalyzes the removal of unsubstituted N-terminal amino acids from various peptides. The protein is Probable cytosol aminopeptidase of Desulfovibrio desulfuricans (strain ATCC 27774 / DSM 6949 / MB).